We begin with the raw amino-acid sequence, 204 residues long: Guanylate kinase (204 aa).

A Guanylate kinase-like domain is found at 5 to 184 (GLLLVLSGPS…AVDHIKSIVE (180 aa)). 12-19 (GPSGVGKG) lines the ATP pocket.

It belongs to the guanylate kinase family.

It is found in the cytoplasm. The catalysed reaction is GMP + ATP = GDP + ADP. Essential for recycling GMP and indirectly, cGMP. The chain is Guanylate kinase from Lactobacillus johnsonii (strain CNCM I-12250 / La1 / NCC 533).